A 302-amino-acid polypeptide reads, in one-letter code: GTP cyclohydrolase FolE2 (302 aa).

The interval 1–27 is disordered; that stretch reads MPKKQLPPKEERHKLFGSVPPKERTKP.

Belongs to the GTP cyclohydrolase IV family.

The enzyme catalyses GTP + H2O = 7,8-dihydroneopterin 3'-triphosphate + formate + H(+). Its pathway is cofactor biosynthesis; 7,8-dihydroneopterin triphosphate biosynthesis; 7,8-dihydroneopterin triphosphate from GTP: step 1/1. Functionally, converts GTP to 7,8-dihydroneopterin triphosphate. In Oceanobacillus iheyensis (strain DSM 14371 / CIP 107618 / JCM 11309 / KCTC 3954 / HTE831), this protein is GTP cyclohydrolase FolE2.